Consider the following 172-residue polypeptide: 3-hydroxydecanoyl-[acyl-carrier-protein] dehydratase (172 aa).

H71 is an active-site residue.

It belongs to the thioester dehydratase family. FabA subfamily. As to quaternary structure, homodimer.

Its subcellular location is the cytoplasm. It carries out the reaction a (3R)-hydroxyacyl-[ACP] = a (2E)-enoyl-[ACP] + H2O. It catalyses the reaction (3R)-hydroxydecanoyl-[ACP] = (2E)-decenoyl-[ACP] + H2O. The enzyme catalyses (2E)-decenoyl-[ACP] = (3Z)-decenoyl-[ACP]. Its pathway is lipid metabolism; fatty acid biosynthesis. Its function is as follows. Necessary for the introduction of cis unsaturation into fatty acids. Catalyzes the dehydration of (3R)-3-hydroxydecanoyl-ACP to E-(2)-decenoyl-ACP and then its isomerization to Z-(3)-decenoyl-ACP. Can catalyze the dehydratase reaction for beta-hydroxyacyl-ACPs with saturated chain lengths up to 16:0, being most active on intermediate chain length. This Aliivibrio salmonicida (strain LFI1238) (Vibrio salmonicida (strain LFI1238)) protein is 3-hydroxydecanoyl-[acyl-carrier-protein] dehydratase.